A 370-amino-acid polypeptide reads, in one-letter code: Anhydro-N-acetylmuramic acid kinase (370 aa).

Residue 13–20 (GTSMDGVD) coordinates ATP.

It belongs to the anhydro-N-acetylmuramic acid kinase family.

It catalyses the reaction 1,6-anhydro-N-acetyl-beta-muramate + ATP + H2O = N-acetyl-D-muramate 6-phosphate + ADP + H(+). It functions in the pathway amino-sugar metabolism; 1,6-anhydro-N-acetylmuramate degradation. The protein operates within cell wall biogenesis; peptidoglycan recycling. Its function is as follows. Catalyzes the specific phosphorylation of 1,6-anhydro-N-acetylmuramic acid (anhMurNAc) with the simultaneous cleavage of the 1,6-anhydro ring, generating MurNAc-6-P. Is required for the utilization of anhMurNAc either imported from the medium or derived from its own cell wall murein, and thus plays a role in cell wall recycling. This chain is Anhydro-N-acetylmuramic acid kinase, found in Shewanella denitrificans (strain OS217 / ATCC BAA-1090 / DSM 15013).